A 189-amino-acid chain; its full sequence is FUN14 domain-containing protein 2 (189 aa).

The Cytoplasmic segment spans residues 1–80; sequence METSAPRAGS…GQESGPSAEK (80 aa). A phosphoserine mark is found at serine 10 and serine 53. Residues 81–101 traverse the membrane as a helical segment; the sequence is YSVATQLFIGGVTGWCTGFIF. Residues 102-107 lie on the Mitochondrial intermembrane side of the membrane; it reads QKVGKL. Residues 108 to 128 form a helical membrane-spanning segment; the sequence is AATAVGGGFFLLQLANHTGYI. The Cytoplasmic segment spans residues 129–164; sequence KVDWQRVEKDMKKAKEQLKIRKSNQIPTEVRSKAEE. Serine 151 carries the phosphoserine modification. A helical transmembrane segment spans residues 165-185; that stretch reads VVSFVKKNVLVTGGFFGGFLL. The Mitochondrial intermembrane segment spans residues 186–189; sequence GMAS.

This sequence belongs to the FUN14 family. As to expression, highly expressed in platelets (at protein level).

The protein localises to the mitochondrion outer membrane. The protein resides in the nucleus. In terms of biological role, binds directly and specifically 1,2-Diacyl-sn-glycero-3-phospho-(1'-myo-inositol-3',4',5'-bisphosphate) (PIP3) leading to the recruitment of PIP3 to mitochondria and may play a role in the regulation of the platelet activation via AKT/GSK3B/cGMP signaling pathways. May act as transcription factor that regulates SREBP1 (isoform SREBP-1C) expression in order to modulate triglyceride (TG) homeostasis in hepatocytes. In Homo sapiens (Human), this protein is FUN14 domain-containing protein 2.